The following is a 461-amino-acid chain: Cysteine--tRNA ligase (461 aa).

Cysteine 28 contacts Zn(2+). The 'HIGH' region signature appears at 30–40; it reads VTIYDLCHIGH. Positions 209, 234, and 238 each coordinate Zn(2+). The short motif at 266–270 is the 'KMSKS' region element; the sequence is KMSKS. Residue lysine 269 participates in ATP binding.

It belongs to the class-I aminoacyl-tRNA synthetase family. As to quaternary structure, monomer. Zn(2+) is required as a cofactor.

The protein localises to the cytoplasm. The enzyme catalyses tRNA(Cys) + L-cysteine + ATP = L-cysteinyl-tRNA(Cys) + AMP + diphosphate. This chain is Cysteine--tRNA ligase, found in Edwardsiella ictaluri (strain 93-146).